Reading from the N-terminus, the 277-residue chain is Phosphate import ATP-binding protein PstB (277 aa).

The ABC transporter domain maps to 31–272 (IEVPGLSLYY…PAKKQTEDYI (242 aa)). ATP is bound at residue 63-70 (GPSGCGKS).

Belongs to the ABC transporter superfamily. Phosphate importer (TC 3.A.1.7) family. The complex is composed of two ATP-binding proteins (PstB), two transmembrane proteins (PstC and PstA) and a solute-binding protein (PstS).

It is found in the cell inner membrane. It catalyses the reaction phosphate(out) + ATP + H2O = ADP + 2 phosphate(in) + H(+). Functionally, part of the ABC transporter complex PstSACB involved in phosphate import. Responsible for energy coupling to the transport system. The polypeptide is Phosphate import ATP-binding protein PstB (Pseudomonas fluorescens (strain ATCC BAA-477 / NRRL B-23932 / Pf-5)).